The chain runs to 239 residues: MGRNDLIRRLPVYATGEHDCPYLDGETACTWFVDPDASLSPGLYSNLIRQGYRRSGRYIYRPGCDACHACQSLRIPVHRFRSRRRHRRCLKANAGATVEPLPSTYREEHYQLYCDYLQARHPGSEMSDPAIGDYLEFLRTDWCETLFYEFRDENDTLLGVAATDLVADGLSAVYTFYRPDLPERSLGTLAILWQINEARRLGLDYVYLGYWIKGCDQMRYKADFRPHEVFNGGRWLTVA.

The protein belongs to the R-transferase family. Bpt subfamily.

Its subcellular location is the cytoplasm. It carries out the reaction N-terminal L-glutamyl-[protein] + L-leucyl-tRNA(Leu) = N-terminal L-leucyl-L-glutamyl-[protein] + tRNA(Leu) + H(+). The enzyme catalyses N-terminal L-aspartyl-[protein] + L-leucyl-tRNA(Leu) = N-terminal L-leucyl-L-aspartyl-[protein] + tRNA(Leu) + H(+). Functionally, functions in the N-end rule pathway of protein degradation where it conjugates Leu from its aminoacyl-tRNA to the N-termini of proteins containing an N-terminal aspartate or glutamate. This chain is Aspartate/glutamate leucyltransferase, found in Alkalilimnicola ehrlichii (strain ATCC BAA-1101 / DSM 17681 / MLHE-1).